A 572-amino-acid chain; its full sequence is Proline--tRNA ligase (572 aa).

This sequence belongs to the class-II aminoacyl-tRNA synthetase family. ProS type 1 subfamily. Homodimer.

It is found in the cytoplasm. It carries out the reaction tRNA(Pro) + L-proline + ATP = L-prolyl-tRNA(Pro) + AMP + diphosphate. Functionally, catalyzes the attachment of proline to tRNA(Pro) in a two-step reaction: proline is first activated by ATP to form Pro-AMP and then transferred to the acceptor end of tRNA(Pro). As ProRS can inadvertently accommodate and process non-cognate amino acids such as alanine and cysteine, to avoid such errors it has two additional distinct editing activities against alanine. One activity is designated as 'pretransfer' editing and involves the tRNA(Pro)-independent hydrolysis of activated Ala-AMP. The other activity is designated 'posttransfer' editing and involves deacylation of mischarged Ala-tRNA(Pro). The misacylated Cys-tRNA(Pro) is not edited by ProRS. This chain is Proline--tRNA ligase, found in Edwardsiella ictaluri (strain 93-146).